The sequence spans 353 residues: Peroxidase C1A (353 aa).

The N-terminal stretch at 1 to 30 is a signal peptide; that stretch reads MHFSSSSTLFTCITLIPLVCLILHASLSDA. Q31 carries the pyrrolidone carboxylic acid modification. Intrachain disulfides connect C41–C121, C74–C79, C127–C331, and C207–C239. N-linked (GlcNAc...) asparagine glycosylation occurs at N43. H72 acts as the Proton acceptor in catalysis. Residues D73, V76, G78, D80, and S82 each coordinate Ca(2+). A glycan (N-linked (GlcNAc...) asparagine) is linked at N87. E94 lines the Ca(2+) pocket. Residue P169 participates in substrate binding. N-linked (GlcNAc...) asparagine glycosylation occurs at N188. H200 is a binding site for heme b. T201 provides a ligand contact to Ca(2+). Residues N216, N228, and N244 are each glycosylated (N-linked (GlcNAc...) asparagine). The Ca(2+) site is built by D252, T255, and D260. N-linked (GlcNAc...) asparagine glycans are attached at residues N285 and N298. Residues 339–353 constitute a propeptide that is removed on maturation; it reads LLHDMVEVVDFVSSM.

This sequence belongs to the peroxidase family. Classical plant (class III) peroxidase subfamily. As to quaternary structure, monomer. Requires Ca(2+) as cofactor. Heme b is required as a cofactor.

Its subcellular location is the secreted. The protein localises to the vacuole. It carries out the reaction 2 a phenolic donor + H2O2 = 2 a phenolic radical donor + 2 H2O. In terms of biological role, removal of H(2)O(2), oxidation of toxic reductants, biosynthesis and degradation of lignin, suberization, auxin catabolism, response to environmental stresses such as wounding, pathogen attack and oxidative stress. These functions might be dependent on each isozyme/isoform in each plant tissue. This is Peroxidase C1A (PRXC1A) from Armoracia rusticana (Horseradish).